The chain runs to 387 residues: Arrestin-C (387 aa).

Belongs to the arrestin family. Retina and pineal gland.

Functionally, may play a role in an as yet undefined retina-specific signal transduction. Could bind to photoactivated-phosphorylated red/green opsins. The protein is Arrestin-C (arr3) of Xenopus laevis (African clawed frog).